The chain runs to 190 residues: Peptide deformylase (190 aa).

Fe cation contacts are provided by Cys106 and His148. Glu149 is a catalytic residue. His152 is a Fe cation binding site.

It belongs to the polypeptide deformylase family. Fe(2+) serves as cofactor.

The enzyme catalyses N-terminal N-formyl-L-methionyl-[peptide] + H2O = N-terminal L-methionyl-[peptide] + formate. In terms of biological role, removes the formyl group from the N-terminal Met of newly synthesized proteins. Requires at least a dipeptide for an efficient rate of reaction. N-terminal L-methionine is a prerequisite for activity but the enzyme has broad specificity at other positions. The sequence is that of Peptide deformylase from Methylacidiphilum infernorum (isolate V4) (Methylokorus infernorum (strain V4)).